Here is a 120-residue protein sequence, read N- to C-terminus: Large ribosomal subunit protein uL18 (120 aa).

A compositionally biased stretch (basic and acidic residues) spans 1–10; the sequence is MKLTRRESKE. The disordered stretch occupies residues 1–26; that stretch reads MKLTRRESKERRHRRVRGKVQGSPER.

Belongs to the universal ribosomal protein uL18 family. As to quaternary structure, part of the 50S ribosomal subunit; part of the 5S rRNA/L5/L18/L25 subcomplex. Contacts the 5S and 23S rRNAs.

This is one of the proteins that bind and probably mediate the attachment of the 5S RNA into the large ribosomal subunit, where it forms part of the central protuberance. This chain is Large ribosomal subunit protein uL18, found in Nostoc sp. (strain PCC 7120 / SAG 25.82 / UTEX 2576).